The following is a 248-amino-acid chain: Ribonuclease 3 (248 aa).

Positions 15–142 (LKAFFKQYHV…MIAALYLDLG (128 aa)) constitute an RNase III domain. Mg(2+) is bound at residue Glu55. The active site involves Asp59. Asp128 and Glu131 together coordinate Mg(2+). The active site involves Glu131. The 72-residue stretch at 169 to 240 (DYKTELQEFL…ARDALQKLAT (72 aa)) folds into the DRBM domain.

The protein belongs to the ribonuclease III family. As to quaternary structure, homodimer. Mg(2+) serves as cofactor.

The protein resides in the cytoplasm. It catalyses the reaction Endonucleolytic cleavage to 5'-phosphomonoester.. Digests double-stranded RNA. Involved in the processing of primary rRNA transcript to yield the immediate precursors to the large and small rRNAs (23S and 16S). Processes some mRNAs, and tRNAs when they are encoded in the rRNA operon. Processes pre-crRNA and tracrRNA of type II CRISPR loci if present in the organism. This Spiroplasma citri protein is Ribonuclease 3.